The primary structure comprises 193 residues: Protein GrpE (193 aa).

Positions 1–22 (MDPKEKEKMAEELNVEETKDTA) are enriched in basic and acidic residues. The disordered stretch occupies residues 1-45 (MDPKEKEKMAEELNVEETKDTAEEQPQDDQAEEAAPLTHEEQLEK). Positions 23–32 (EEQPQDDQAE) are enriched in acidic residues.

This sequence belongs to the GrpE family. As to quaternary structure, homodimer.

The protein resides in the cytoplasm. In terms of biological role, participates actively in the response to hyperosmotic and heat shock by preventing the aggregation of stress-denatured proteins, in association with DnaK and GrpE. It is the nucleotide exchange factor for DnaK and may function as a thermosensor. Unfolded proteins bind initially to DnaJ; upon interaction with the DnaJ-bound protein, DnaK hydrolyzes its bound ATP, resulting in the formation of a stable complex. GrpE releases ADP from DnaK; ATP binding to DnaK triggers the release of the substrate protein, thus completing the reaction cycle. Several rounds of ATP-dependent interactions between DnaJ, DnaK and GrpE are required for fully efficient folding. The sequence is that of Protein GrpE from Bacteroides thetaiotaomicron (strain ATCC 29148 / DSM 2079 / JCM 5827 / CCUG 10774 / NCTC 10582 / VPI-5482 / E50).